We begin with the raw amino-acid sequence, 940 residues long: Lysine-specific demethylase 7A (940 aa).

The PHD-type zinc-finger motif lies at 37-88; the sequence is PVYCVCRQPYDVNRFMIECDVCKDWFHGSCVGVEEHHAVDIDLYHCPDCAAL. Positions 97 to 114 are linker; the sequence is RRNWHRHDYTEVDDGSKP. In terms of domain architecture, JmjC spans 230 to 386; it reads FSDTKMSELV…MQLRCYEMEK (157 aa). Thr-279 contacts substrate. Fe cation contacts are provided by His-282 and Asp-284. Residue Lys-299 participates in substrate binding. Residue His-354 participates in Fe cation binding. Disordered regions lie at residues 483–509, 599–670, 710–729, 818–854, and 876–920; these read VKSQ…HSRR, LYTA…PDCT, SQKP…TSTS, NAQD…SSSI, and SPER…MATA. The residue at position 604 (Ser-604) is a Phosphoserine. Positions 613–623 are enriched in polar residues; the sequence is TQNANMKTEQS. Residues 714–724 show a composition bias toward basic and acidic residues; it reads SRQEIPVKREC.

This sequence belongs to the JHDM1 histone demethylase family. JHDM1D subfamily. Requires Fe(2+) as cofactor.

It is found in the nucleus. It carries out the reaction N(6),N(6)-dimethyl-L-lysyl(9)-[histone H3] + 2 2-oxoglutarate + 2 O2 = L-lysyl(9)-[histone H3] + 2 formaldehyde + 2 succinate + 2 CO2. The enzyme catalyses N(6),N(6)-dimethyl-L-lysyl(27)-[histone H3] + 2 2-oxoglutarate + 2 O2 = L-lysyl(27)-[histone H3] + 2 formaldehyde + 2 succinate + 2 CO2. The catalysed reaction is N(6),N(6)-dimethyl-L-lysyl(36)-[histone H3] + 2-oxoglutarate + O2 = N(6)-methyl-L-lysyl(36)-[histone H3] + formaldehyde + succinate + CO2. It catalyses the reaction N(6)-methyl-L-lysyl(20)-[histone H4] + 2-oxoglutarate + O2 = L-lysyl(20)-[histone H4] + formaldehyde + succinate + CO2. Histone demethylase required for brain development. Specifically demethylates dimethylated 'Lys-9', 'Lys-27' and 'Lys-36' (H3K9me2, H3K27me2, H3K36me2, respectively) of histone H3 and monomethylated histone H4 'Lys-20' residue (H4K20Me1), thereby playing a central role in histone code. Specifically binds trimethylated 'Lys-4' of histone H3 (H3K4me3), affecting histone demethylase specificity: in presence of H3K4me3, it has no demethylase activity toward H3K9me2, while it has high activity toward H3K27me2. Demethylates H3K9me2 in absence of H3K4me3. Has activity toward H4K20Me1 only when nucleosome is used as a substrate and when not histone octamer is used as substrate. This chain is Lysine-specific demethylase 7A (Kdm7a), found in Mus musculus (Mouse).